The chain runs to 320 residues: Probable serine proteinase inhibitor 1 (320 aa).

The protein belongs to the serpin family. Poxviruses subfamily.

The chain is Probable serine proteinase inhibitor 1 (SPI-1) from Swinepox virus (strain Kasza) (SWPV).